Consider the following 546-residue polypeptide: Chaperonin GroEL (546 aa).

ATP contacts are provided by residues 30 to 33 (TLGP), lysine 51, 87 to 91 (DGTTT), glycine 415, 479 to 481 (NAA), and aspartate 495.

It belongs to the chaperonin (HSP60) family. Forms a cylinder of 14 subunits composed of two heptameric rings stacked back-to-back. Interacts with the co-chaperonin GroES.

The protein localises to the cytoplasm. It carries out the reaction ATP + H2O + a folded polypeptide = ADP + phosphate + an unfolded polypeptide.. Its function is as follows. Together with its co-chaperonin GroES, plays an essential role in assisting protein folding. The GroEL-GroES system forms a nano-cage that allows encapsulation of the non-native substrate proteins and provides a physical environment optimized to promote and accelerate protein folding. The chain is Chaperonin GroEL from Pseudomonas putida (strain ATCC 700007 / DSM 6899 / JCM 31910 / BCRC 17059 / LMG 24140 / F1).